A 99-amino-acid polypeptide reads, in one-letter code: DNA-directed RNA polymerase subunit omega (99 aa).

Belongs to the RNA polymerase subunit omega family. As to quaternary structure, the RNAP catalytic core consists of 2 alpha, 1 beta, 1 beta' and 1 omega subunit. When a sigma factor is associated with the core the holoenzyme is formed, which can initiate transcription.

It carries out the reaction RNA(n) + a ribonucleoside 5'-triphosphate = RNA(n+1) + diphosphate. Its function is as follows. Promotes RNA polymerase assembly. Latches the N- and C-terminal regions of the beta' subunit thereby facilitating its interaction with the beta and alpha subunits. This is DNA-directed RNA polymerase subunit omega (rpoZ) from Deinococcus radiodurans (strain ATCC 13939 / DSM 20539 / JCM 16871 / CCUG 27074 / LMG 4051 / NBRC 15346 / NCIMB 9279 / VKM B-1422 / R1).